The primary structure comprises 172 residues: Ribosome maturation factor RimM (172 aa).

Residues 96-168 (DGEFYYHEII…RVQVELMEGL (73 aa)) enclose the PRC barrel domain.

This sequence belongs to the RimM family. In terms of assembly, binds ribosomal protein uS19.

The protein resides in the cytoplasm. Its function is as follows. An accessory protein needed during the final step in the assembly of 30S ribosomal subunit, possibly for assembly of the head region. Essential for efficient processing of 16S rRNA. May be needed both before and after RbfA during the maturation of 16S rRNA. It has affinity for free ribosomal 30S subunits but not for 70S ribosomes. The polypeptide is Ribosome maturation factor RimM (Streptococcus agalactiae serotype III (strain NEM316)).